The primary structure comprises 53 residues: Small, acid-soluble spore protein O (53 aa).

The tract at residues 1–53 (MVRKKANHSRPGMNAAKAQGKDAGLTSQFHAEIGQEPLNQAQRQNNKKRKKNQ) is disordered.

The protein belongs to the SspO family.

The protein localises to the spore core. The sequence is that of Small, acid-soluble spore protein O from Halalkalibacterium halodurans (strain ATCC BAA-125 / DSM 18197 / FERM 7344 / JCM 9153 / C-125) (Bacillus halodurans).